Here is a 144-residue protein sequence, read N- to C-terminus: Small ribosomal subunit protein eS19 (144 aa).

It belongs to the eukaryotic ribosomal protein eS19 family.

The polypeptide is Small ribosomal subunit protein eS19 (RPS19) (Argopecten irradians (Bay scallop)).